Reading from the N-terminus, the 259-residue chain is tRNA (guanine-N(7)-)-methyltransferase (259 aa).

The segment at 1 to 73 is disordered; that stretch reads MGHHGQMHAQ…GPAEDPDRPG (73 aa). E91, E116, N143, and D166 together coordinate S-adenosyl-L-methionine. Residue D166 is part of the active site. Substrate contacts are provided by residues K170, D202, and 238–241; that span reads TKYE.

The protein belongs to the class I-like SAM-binding methyltransferase superfamily. TrmB family.

The enzyme catalyses guanosine(46) in tRNA + S-adenosyl-L-methionine = N(7)-methylguanosine(46) in tRNA + S-adenosyl-L-homocysteine. Its pathway is tRNA modification; N(7)-methylguanine-tRNA biosynthesis. In terms of biological role, catalyzes the formation of N(7)-methylguanine at position 46 (m7G46) in tRNA. This is tRNA (guanine-N(7)-)-methyltransferase from Mycolicibacterium paratuberculosis (strain ATCC BAA-968 / K-10) (Mycobacterium paratuberculosis).